The sequence spans 249 residues: Nodulation protein H (249 aa).

Its function is as follows. Required for the formation of sulfated nod factor. Proposed to transfer activated sulfate (PAPS) to a N-acetylglucosamine of the nod factor. The chain is Nodulation protein H (nodH) from Rhizobium tropici.